The chain runs to 444 residues: Ribosomal protein uS12 methylthiotransferase RimO (444 aa).

One can recognise an MTTase N-terminal domain in the interval 1–117 (MKVGIISLGC…ITEVISSALK (117 aa)). [4Fe-4S] cluster is bound by residues C10, C46, C80, C154, C158, and C161. Positions 140-370 (YQPGPSAYIK…WEVQKEITRK (231 aa)) constitute a Radical SAM core domain. A TRAM domain is found at 373–441 (EGLVGTEMRV…DYDLIGEMTN (69 aa)).

The protein belongs to the methylthiotransferase family. RimO subfamily. [4Fe-4S] cluster serves as cofactor.

It localises to the cytoplasm. The catalysed reaction is L-aspartate(89)-[ribosomal protein uS12]-hydrogen + (sulfur carrier)-SH + AH2 + 2 S-adenosyl-L-methionine = 3-methylsulfanyl-L-aspartate(89)-[ribosomal protein uS12]-hydrogen + (sulfur carrier)-H + 5'-deoxyadenosine + L-methionine + A + S-adenosyl-L-homocysteine + 2 H(+). Catalyzes the methylthiolation of an aspartic acid residue of ribosomal protein uS12. The chain is Ribosomal protein uS12 methylthiotransferase RimO from Natranaerobius thermophilus (strain ATCC BAA-1301 / DSM 18059 / JW/NM-WN-LF).